We begin with the raw amino-acid sequence, 198 residues long: Dynein light chain Tctex-type protein 2 (198 aa).

Residues 1 to 34 (MEKRGRGVKSSPIQTPNQTPQQAPVTPRKERRPS) are disordered. A compositionally biased stretch (polar residues) spans 11–24 (SPIQTPNQTPQQAP).

Belongs to the dynein light chain Tctex-type family. In terms of assembly, interacts with CCDC159. Interacts with CSNK2B. In terms of tissue distribution, expressed predominantly in testis. Also expressed in brain, lung and trachea.

The protein localises to the cytoplasm. The protein resides in the cytoskeleton. It localises to the cytoplasmic granule. It is found in the membrane. May be an accessory component of axonemal dynein and cytoplasmic dynein 1. Candidate for involvement in male sterility. The polypeptide is Dynein light chain Tctex-type protein 2 (Homo sapiens (Human)).